The sequence spans 201 residues: Small ribosomal subunit protein uS4 (201 aa).

The S4 RNA-binding domain maps to 91–157; it reads SRLDNVIYRA…VPFQIARETA (67 aa).

It belongs to the universal ribosomal protein uS4 family. As to quaternary structure, part of the 30S ribosomal subunit. Contacts protein S5. The interaction surface between S4 and S5 is involved in control of translational fidelity.

In terms of biological role, one of the primary rRNA binding proteins, it binds directly to 16S rRNA where it nucleates assembly of the body of the 30S subunit. With S5 and S12 plays an important role in translational accuracy. In Mycobacterium tuberculosis (strain ATCC 25177 / H37Ra), this protein is Small ribosomal subunit protein uS4.